Here is a 257-residue protein sequence, read N- to C-terminus: Probable enoyl-CoA hydratase (257 aa).

It belongs to the enoyl-CoA hydratase/isomerase family.

The enzyme catalyses a (3S)-3-hydroxyacyl-CoA = a (2E)-enoyl-CoA + H2O. The catalysed reaction is a 4-saturated-(3S)-3-hydroxyacyl-CoA = a (3E)-enoyl-CoA + H2O. Its function is as follows. Could possibly oxidize fatty acids using specific components. In Rhodobacter capsulatus (strain ATCC BAA-309 / NBRC 16581 / SB1003), this protein is Probable enoyl-CoA hydratase (fadB1).